The following is a 158-amino-acid chain: Protein Smg homolog (158 aa).

This sequence belongs to the Smg family.

The polypeptide is Protein Smg homolog (Vibrio cholerae serotype O1 (strain ATCC 39315 / El Tor Inaba N16961)).